Consider the following 327-residue polypeptide: DNA-directed RNA polymerase subunit alpha (327 aa).

The tract at residues Met1–Glu233 is alpha N-terminal domain (alpha-NTD). An alpha C-terminal domain (alpha-CTD) region spans residues Leu267–Lys327.

The protein belongs to the RNA polymerase alpha chain family. As to quaternary structure, in plastids the minimal PEP RNA polymerase catalytic core is composed of four subunits: alpha, beta, beta', and beta''. When a (nuclear-encoded) sigma factor is associated with the core the holoenzyme is formed, which can initiate transcription.

The protein resides in the plastid. The protein localises to the chloroplast. The catalysed reaction is RNA(n) + a ribonucleoside 5'-triphosphate = RNA(n+1) + diphosphate. In terms of biological role, DNA-dependent RNA polymerase catalyzes the transcription of DNA into RNA using the four ribonucleoside triphosphates as substrates. This chain is DNA-directed RNA polymerase subunit alpha, found in Lobularia maritima (Sweet alyssum).